The chain runs to 413 residues: Cardiolipin synthase B (413 aa).

2 consecutive PLD phosphodiesterase domains span residues 108 to 135 (VFRRMHRKIVVIDARIAFIGGLNYSSEH) and 285 to 312 (RRRPLHGKVALMDDHWATVGSSNLDPLS). Catalysis depends on residues His113, Lys115, Asp120, His290, Lys292, and Asp297. The interval 388–413 (TQVDPPAQPTMETQDRVETENTGVNP) is disordered.

The protein belongs to the phospholipase D family. Cardiolipin synthase subfamily. ClsB sub-subfamily.

It localises to the cell membrane. The enzyme catalyses 2 a 1,2-diacyl-sn-glycero-3-phospho-(1'-sn-glycerol) = a cardiolipin + glycerol. Its function is as follows. Catalyzes the phosphatidyl group transfer from one phosphatidylglycerol molecule to another to form cardiolipin (CL) (diphosphatidylglycerol) and glycerol. This Shigella flexneri protein is Cardiolipin synthase B.